Here is a 91-residue protein sequence, read N- to C-terminus: Non-specific lipid-transfer protein 1 (91 aa).

4 disulfide bridges follow: cysteine 4/cysteine 51, cysteine 14/cysteine 28, cysteine 29/cysteine 74, and cysteine 49/cysteine 88.

In terms of tissue distribution, expressed in seeds (at protein level).

Functionally, plant non-specific lipid-transfer proteins transfer phospholipids as well as galactolipids across membranes. May play a role in wax or cutin deposition in the cell walls of expanding epidermal cells and certain secretory tissues. Binds to both saturated and unsaturated lipids, with the highest binding efficiency for linoleic acid, followed by linolenic acid. This is Non-specific lipid-transfer protein 1 from Foeniculum vulgare (Fennel).